The following is a 184-amino-acid chain: ATP synthase subunit b, chloroplastic (184 aa).

The chain crosses the membrane as a helical span at residues 27 to 49 (LATNPINLSVVFGVLIFFGKGVL).

This sequence belongs to the ATPase B chain family. In terms of assembly, F-type ATPases have 2 components, F(1) - the catalytic core - and F(0) - the membrane proton channel. F(1) has five subunits: alpha(3), beta(3), gamma(1), delta(1), epsilon(1). F(0) has four main subunits: a(1), b(1), b'(1) and c(10-14). The alpha and beta chains form an alternating ring which encloses part of the gamma chain. F(1) is attached to F(0) by a central stalk formed by the gamma and epsilon chains, while a peripheral stalk is formed by the delta, b and b' chains.

The protein localises to the plastid. The protein resides in the chloroplast thylakoid membrane. Functionally, f(1)F(0) ATP synthase produces ATP from ADP in the presence of a proton or sodium gradient. F-type ATPases consist of two structural domains, F(1) containing the extramembraneous catalytic core and F(0) containing the membrane proton channel, linked together by a central stalk and a peripheral stalk. During catalysis, ATP synthesis in the catalytic domain of F(1) is coupled via a rotary mechanism of the central stalk subunits to proton translocation. Component of the F(0) channel, it forms part of the peripheral stalk, linking F(1) to F(0). The polypeptide is ATP synthase subunit b, chloroplastic (Draba nemorosa (Woodland whitlowgrass)).